Here is a 589-residue protein sequence, read N- to C-terminus: Mediator of RNA polymerase II transcription subunit 26 (589 aa).

The 78-residue stretch at 10 to 87 (QMRDRLLQAI…RNWQKLIEPG (78 aa)) folds into the TFIIS N-terminal domain. Disordered stretches follow at residues 83–233 (LIEP…TKLP), 247–320 (ARVD…DGPS), and 363–441 (LETK…PIPE). A compositionally biased stretch (basic and acidic residues) spans 190–213 (LLEKDDEVPSDRIRLEHLDNDRHN). Residues 259–268 (SPRYSSSPRS) show a composition bias toward low complexity. The span at 276-297 (KRSTTYAPKGTLSSPSLNSAQV) shows a compositional bias: polar residues. 2 stretches are compositionally biased toward basic and acidic residues: residues 398 to 412 (SEDR…RRLT) and 424 to 435 (TPKESHQEEECH).

Belongs to the Mediator complex subunit 26 family. As to quaternary structure, component of the Mediator complex.

The protein localises to the nucleus. Component of the Mediator complex, a coactivator involved in the regulated transcription of nearly all RNA polymerase II-dependent genes. Mediator functions as a bridge to convey information from gene-specific regulatory proteins to the basal RNA polymerase II transcription machinery. Mediator is recruited to promoters by direct interactions with regulatory proteins and serves as a scaffold for the assembly of a functional preinitiation complex with RNA polymerase II and the general transcription factors. In Danio rerio (Zebrafish), this protein is Mediator of RNA polymerase II transcription subunit 26 (med26).